Consider the following 488-residue polypeptide: 3-octaprenyl-4-hydroxybenzoate carboxy-lyase (488 aa).

Asn172 is a binding site for Mn(2+). Residues Ile175 to Arg177, Arg189 to Leu191, and Arg194 to Gly195 each bind prenylated FMN. Glu238 is a binding site for Mn(2+). The Proton donor role is filled by Asp287.

Belongs to the UbiD family. Homohexamer. The cofactor is prenylated FMN. Requires Mn(2+) as cofactor.

Its subcellular location is the cell membrane. The catalysed reaction is a 4-hydroxy-3-(all-trans-polyprenyl)benzoate + H(+) = a 2-(all-trans-polyprenyl)phenol + CO2. Its pathway is cofactor biosynthesis; ubiquinone biosynthesis. In terms of biological role, catalyzes the decarboxylation of 3-octaprenyl-4-hydroxy benzoate to 2-octaprenylphenol, an intermediate step in ubiquinone biosynthesis. This chain is 3-octaprenyl-4-hydroxybenzoate carboxy-lyase, found in Legionella pneumophila (strain Lens).